Consider the following 137-residue polypeptide: Protein Flattop homolog (137 aa).

This sequence belongs to the Flattop family.

It is found in the cytoplasm. The protein resides in the cytoskeleton. Its subcellular location is the flagellum axoneme. Functionally, microtubule inner protein (MIP) part of the dynein-decorated doublet microtubules (DMTs) in cilia axoneme. Acts as a regulator of cilium basal body docking and positioning in mono- and multiciliated cells. Regulates basal body docking and cilia formation in multiciliated lung cells. Regulates kinocilium positioning and stereocilia bundle morphogenesis in the inner ear. The polypeptide is Protein Flattop homolog (Chlamydomonas reinhardtii (Chlamydomonas smithii)).